We begin with the raw amino-acid sequence, 452 residues long: Probable 1,4-beta-D-glucan cellobiohydrolase A (452 aa).

The N-terminal stretch at methionine 1–alanine 17 is a signal peptide. Asparagine 81 is a glycosylation site (N-linked (GlcNAc...) asparagine). Glutamate 226 acts as the Nucleophile in catalysis. The active-site Proton donor is glutamate 231. Asparagine 284 carries N-linked (GlcNAc...) asparagine glycosylation. Residues alanine 405–histidine 431 form a disordered region.

Belongs to the glycosyl hydrolase 7 (cellulase C) family.

It localises to the secreted. It carries out the reaction Hydrolysis of (1-&gt;4)-beta-D-glucosidic linkages in cellulose and cellotetraose, releasing cellobiose from the non-reducing ends of the chains.. Functionally, the biological conversion of cellulose to glucose generally requires three types of hydrolytic enzymes: (1) Endoglucanases which cut internal beta-1,4-glucosidic bonds; (2) Exocellobiohydrolases that cut the disaccharide cellobiose from the non-reducing end of the cellulose polymer chain; (3) Beta-1,4-glucosidases which hydrolyze the cellobiose and other short cello-oligosaccharides to glucose. The sequence is that of Probable 1,4-beta-D-glucan cellobiohydrolase A (cbhA) from Aspergillus fumigatus (strain CBS 144.89 / FGSC A1163 / CEA10) (Neosartorya fumigata).